The chain runs to 389 residues: snRNA-activating protein complex subunit 1 (389 aa).

The segment covering 1–15 (MGTPAGAGTRPTGAG) has biased composition (low complexity). Disordered stretches follow at residues 1–22 (MGTPAGAGTRPTGAGTVEGVGI), 245–276 (WHKERKNPSLKPKLKDGEENGEGSSEEPERCE), and 290–389 (SAVV…KRKC). The interval 20–187 (VGIPPGLQTD…QKFKDPNDRV (168 aa)) is SNAPC3-binding. Residues 183 to 287 (PNDRVMKLIT…AVSLAKIKAK (105 aa)) form an SNAPC4-binding region. Positions 245 to 262 (WHKERKNPSLKPKLKDGE) are enriched in basic and acidic residues. Residues serine 308 and serine 309 each carry the phosphoserine modification.

Part of the SNAPc complex composed of 5 subunits: SNAPC1, SNAPC2, SNAPC3, SNAPC4 and SNAPC5. SNAPC1 interacts with SNAPC3, SNAPC4 and TBP.

It is found in the nucleus. Its function is as follows. Part of the SNAPc complex required for the transcription of both RNA polymerase II and III small-nuclear RNA genes. Binds to the proximal sequence element (PSE), a non-TATA-box basal promoter element common to these 2 types of genes. Recruits TBP and BRF2 to the U6 snRNA TATA box. This chain is snRNA-activating protein complex subunit 1 (Snapc1), found in Mus musculus (Mouse).